Reading from the N-terminus, the 280-residue chain is Putative protein-tyrosine sulfotransferase (280 aa).

A 3'-phosphoadenylyl sulfate-binding site is contributed by 16-20 (RSGTT). A disulfide bond links Cys-34 and Cys-89. Catalysis depends on Glu-37, which acts as the Proton donor/acceptor. Asn-57 carries an N-linked (GlcNAc...) asparagine glycan. Residues Arg-116, Ser-124, and Arg-128 each contribute to the 3'-phosphoadenylyl sulfate site. N-linked (GlcNAc...) asparagine glycosylation is present at Asn-136. Cys-158 and Cys-165 form a disulfide bridge. Residues Tyr-170 and 215–224 (SASQVKNSIN) contribute to the 3'-phosphoadenylyl sulfate site.

The protein belongs to the protein sulfotransferase family.

It catalyses the reaction L-tyrosyl-[protein] + 3'-phosphoadenylyl sulfate = O-sulfo-L-tyrosine-[protein] + adenosine 3',5'-bisphosphate + H(+). Catalyzes the O-sulfation of tyrosine residues within acidic motifs of polypeptides, using 3'-phosphoadenylyl sulfate (PAPS) as cosubstrate. The polypeptide is Putative protein-tyrosine sulfotransferase (Caenorhabditis briggsae).